Reading from the N-terminus, the 876-residue chain is Alanine--tRNA ligase (876 aa).

Position 74 is an N6-acetyllysine (lysine 74). Zn(2+)-binding residues include histidine 564, histidine 568, cysteine 666, and histidine 670.

It belongs to the class-II aminoacyl-tRNA synthetase family. As to quaternary structure, homotetramer. Requires Zn(2+) as cofactor.

It is found in the cytoplasm. The catalysed reaction is tRNA(Ala) + L-alanine + ATP = L-alanyl-tRNA(Ala) + AMP + diphosphate. Catalyzes the attachment of alanine to tRNA(Ala) in a two-step reaction: alanine is first activated by ATP to form Ala-AMP and then transferred to the acceptor end of tRNA(Ala). Also edits incorrectly charged Ser-tRNA(Ala) and Gly-tRNA(Ala) via its editing domain. This is Alanine--tRNA ligase from Shigella boydii serotype 4 (strain Sb227).